We begin with the raw amino-acid sequence, 24 residues long: Formate ester dehydrogenase gamma chain (24 aa).

Heterotrimer composed of an alpha, a beta and a gamma chain.

This is Formate ester dehydrogenase gamma chain from Amycolatopsis methanolica.